Reading from the N-terminus, the 372-residue chain is Queuine tRNA-ribosyltransferase (372 aa).

The active-site Proton acceptor is the Asp-92. Substrate is bound by residues 92 to 96 (DSGGF), Asp-146, Gln-188, and Gly-215. Positions 246 to 252 (GIGTLRE) are RNA binding. Catalysis depends on Asp-265, which acts as the Nucleophile. An RNA binding; important for wobble base 34 recognition region spans residues 270–274 (TRLGR). Cys-303, Cys-305, Cys-308, and His-334 together coordinate Zn(2+).

Belongs to the queuine tRNA-ribosyltransferase family. Homodimer. Within each dimer, one monomer is responsible for RNA recognition and catalysis, while the other monomer binds to the replacement base PreQ1. It depends on Zn(2+) as a cofactor.

It catalyses the reaction 7-aminomethyl-7-carbaguanine + guanosine(34) in tRNA = 7-aminomethyl-7-carbaguanosine(34) in tRNA + guanine. Its pathway is tRNA modification; tRNA-queuosine biosynthesis. Its function is as follows. Catalyzes the base-exchange of a guanine (G) residue with the queuine precursor 7-aminomethyl-7-deazaguanine (PreQ1) at position 34 (anticodon wobble position) in tRNAs with GU(N) anticodons (tRNA-Asp, -Asn, -His and -Tyr). Catalysis occurs through a double-displacement mechanism. The nucleophile active site attacks the C1' of nucleotide 34 to detach the guanine base from the RNA, forming a covalent enzyme-RNA intermediate. The proton acceptor active site deprotonates the incoming PreQ1, allowing a nucleophilic attack on the C1' of the ribose to form the product. After dissociation, two additional enzymatic reactions on the tRNA convert PreQ1 to queuine (Q), resulting in the hypermodified nucleoside queuosine (7-(((4,5-cis-dihydroxy-2-cyclopenten-1-yl)amino)methyl)-7-deazaguanosine). The polypeptide is Queuine tRNA-ribosyltransferase (Prochlorococcus marinus (strain MIT 9303)).